A 663-amino-acid polypeptide reads, in one-letter code: UvrABC system protein B (663 aa).

Residues 26-414 form the Helicase ATP-binding domain; that stretch reads DGLESGLAKQ…DNVAEQVVRP (389 aa). 39–46 provides a ligand contact to ATP; it reads GVTGSGKT. Residues 92–115 carry the Beta-hairpin motif; that stretch reads YYDYYQPEAYVPASDTFIEKDASI. A Helicase C-terminal domain is found at 430 to 596; the sequence is QVDDLMSEIR…GINKSVEDIL (167 aa). The region spanning 624–659 is the UVR domain; the sequence is VKQINALEKQMYSHAQNMEFELAAKIRDEYLLLKEQ.

The protein belongs to the UvrB family. In terms of assembly, forms a heterotetramer with UvrA during the search for lesions. Interacts with UvrC in an incision complex.

It is found in the cytoplasm. The UvrABC repair system catalyzes the recognition and processing of DNA lesions. A damage recognition complex composed of 2 UvrA and 2 UvrB subunits scans DNA for abnormalities. Upon binding of the UvrA(2)B(2) complex to a putative damaged site, the DNA wraps around one UvrB monomer. DNA wrap is dependent on ATP binding by UvrB and probably causes local melting of the DNA helix, facilitating insertion of UvrB beta-hairpin between the DNA strands. Then UvrB probes one DNA strand for the presence of a lesion. If a lesion is found the UvrA subunits dissociate and the UvrB-DNA preincision complex is formed. This complex is subsequently bound by UvrC and the second UvrB is released. If no lesion is found, the DNA wraps around the other UvrB subunit that will check the other stand for damage. This is UvrABC system protein B from Legionella pneumophila subsp. pneumophila (strain Philadelphia 1 / ATCC 33152 / DSM 7513).